The following is a 65-amino-acid chain: Protein MalX (65 aa).

The chain is Protein MalX (malX) from Klebsiella pneumoniae.